Here is a 396-residue protein sequence, read N- to C-terminus: Putative peptide chain release factor 1, mitochondrial (396 aa).

Glutamine 270 bears the N5-methylglutamine mark.

The protein belongs to the prokaryotic/mitochondrial release factor family. In terms of processing, methylation of glutamine in the GGQ triplet is conserved from bacteria to mammals.

It is found in the mitochondrion. In Schizosaccharomyces pombe (strain 972 / ATCC 24843) (Fission yeast), this protein is Putative peptide chain release factor 1, mitochondrial.